Consider the following 92-residue polypeptide: Putative regulatory protein Tpet_0986 (92 aa).

It belongs to the RemA family.

The polypeptide is Putative regulatory protein Tpet_0986 (Thermotoga petrophila (strain ATCC BAA-488 / DSM 13995 / JCM 10881 / RKU-1)).